The chain runs to 315 residues: Olfactory receptor 52R1 (315 aa).

Residues 1–28 are Extracellular-facing; sequence MVLASGNSSSHPVSFILLGIPGLESFQL. A glycan (N-linked (GlcNAc...) asparagine) is linked at Asn-7. A helical membrane pass occupies residues 29 to 49; it reads WIAFPFCATYAVAVVGNITLL. Residues 50–57 lie on the Cytoplasmic side of the membrane; the sequence is HVIRIDHT. Residues 58–78 form a helical membrane-spanning segment; the sequence is LHEPMYLFLAMLAITDLVLSS. Topologically, residues 79–102 are extracellular; the sequence is STQPKMLAIFWFHAHEIQYHACLI. A disulfide bridge connects residues Cys-100 and Cys-192. Residues 103–123 form a helical membrane-spanning segment; it reads QVFFIHAFSSVESGVLMAMAL. At 124 to 142 the chain is on the cytoplasmic side; the sequence is DCYVAICFPLRHSSILTPS. The chain crosses the membrane as a helical span at residues 143-163; that stretch reads VVIKLGTIVMLRGLLWVSPFC. Residues 164–199 lie on the Extracellular side of the membrane; the sequence is FMVSRMPFCQHQAIPQSYCEHMAVLKLVCADTSISR. Residues 200-220 traverse the membrane as a helical segment; sequence GNGLFVAFSVAGFDMIVIGMS. Over 221–240 the chain is Cytoplasmic; it reads YVMILRAVLQLPSGEARLKA. The chain crosses the membrane as a helical span at residues 241-261; that stretch reads FSTRSSHICVILALYIPALFS. The Extracellular portion of the chain corresponds to 262–276; that stretch reads FLTYRFGHDVPRVVH. A helical membrane pass occupies residues 277-297; sequence ILFANLYLLIPPMLNPIIYGV. Topologically, residues 298–315 are cytoplasmic; sequence RTKQIGDRVIQGCCGNIP.

This sequence belongs to the G-protein coupled receptor 1 family.

It is found in the cell membrane. Functionally, odorant receptor. The polypeptide is Olfactory receptor 52R1 (OR52R1) (Homo sapiens (Human)).